A 211-amino-acid chain; its full sequence is Redox-sensing transcriptional repressor Rex (211 aa).

The H-T-H motif DNA-binding region spans 13–52 (TYLRILEELEAQGVHRTSSEQLGELAQVTAFQVRKDLSYF). NAD(+) is bound at residue 87–92 (GMGRLG).

It belongs to the transcriptional regulatory Rex family. Homodimer.

Its subcellular location is the cytoplasm. Modulates transcription in response to changes in cellular NADH/NAD(+) redox state. This Thermus aquaticus protein is Redox-sensing transcriptional repressor Rex.